The chain runs to 166 residues: Nucleotide-binding protein SUN_0226 (166 aa).

Belongs to the YajQ family.

Functionally, nucleotide-binding protein. The chain is Nucleotide-binding protein SUN_0226 from Sulfurovum sp. (strain NBC37-1).